The chain runs to 619 residues: Hypermethylated in cancer 2 protein (619 aa).

In terms of domain architecture, BTB spans 46–109 (CDVIIMVENS…IYTGKLLPSD (64 aa)). A phosphoserine mark is found at Ser-166, Ser-169, and Ser-197. Disordered regions lie at residues 180–293 (DVRK…VGNS) and 307–426 (MDVE…GHTG). A compositionally biased stretch (gly residues) spans 214–228 (LGLGGPAGGEMGLGG). A binding to CtBP region spans residues 247 to 249 (DLS). Over residues 281 to 293 (APTSTSALPVGNS) the composition is skewed to polar residues. Over residues 337–357 (KKDWNKKEPVAGSPFDRRETG) the composition is skewed to basic and acidic residues. Phosphoserine occurs at positions 349 and 416. C2H2-type zinc fingers lie at residues 446-468 (YVCI…VETH), 509-531 (FKCS…EKTH), 537-559 (FPCN…MRSH), 565-587 (FACD…MRVH), and 593-615 (YECQ…LRMH).

This sequence belongs to the krueppel C2H2-type zinc-finger protein family. Hic subfamily. In terms of assembly, self-associates. Interacts with HIC1.

It localises to the nucleus. Transcriptional repressor. The protein is Hypermethylated in cancer 2 protein (Hic2) of Mus musculus (Mouse).